Consider the following 213-residue polypeptide: Thiamine-phosphate synthase (213 aa).

4-amino-2-methyl-5-(diphosphooxymethyl)pyrimidine is bound by residues 40 to 44 and Asn-75; that span reads QFREK. Asp-76 and Asp-95 together coordinate Mg(2+). Residue Ser-113 participates in 4-amino-2-methyl-5-(diphosphooxymethyl)pyrimidine binding. 139 to 141 is a 2-[(2R,5Z)-2-carboxy-4-methylthiazol-5(2H)-ylidene]ethyl phosphate binding site; that stretch reads TPS. Lys-142 lines the 4-amino-2-methyl-5-(diphosphooxymethyl)pyrimidine pocket. 2-[(2R,5Z)-2-carboxy-4-methylthiazol-5(2H)-ylidene]ethyl phosphate-binding positions include Gly-171 and 191 to 192; that span reads IS.

The protein belongs to the thiamine-phosphate synthase family. Mg(2+) is required as a cofactor.

The catalysed reaction is 2-[(2R,5Z)-2-carboxy-4-methylthiazol-5(2H)-ylidene]ethyl phosphate + 4-amino-2-methyl-5-(diphosphooxymethyl)pyrimidine + 2 H(+) = thiamine phosphate + CO2 + diphosphate. It catalyses the reaction 2-(2-carboxy-4-methylthiazol-5-yl)ethyl phosphate + 4-amino-2-methyl-5-(diphosphooxymethyl)pyrimidine + 2 H(+) = thiamine phosphate + CO2 + diphosphate. The enzyme catalyses 4-methyl-5-(2-phosphooxyethyl)-thiazole + 4-amino-2-methyl-5-(diphosphooxymethyl)pyrimidine + H(+) = thiamine phosphate + diphosphate. The protein operates within cofactor biosynthesis; thiamine diphosphate biosynthesis; thiamine phosphate from 4-amino-2-methyl-5-diphosphomethylpyrimidine and 4-methyl-5-(2-phosphoethyl)-thiazole: step 1/1. Functionally, condenses 4-methyl-5-(beta-hydroxyethyl)thiazole monophosphate (THZ-P) and 2-methyl-4-amino-5-hydroxymethyl pyrimidine pyrophosphate (HMP-PP) to form thiamine monophosphate (TMP). This is Thiamine-phosphate synthase from Staphylococcus aureus (strain JH1).